Here is a 128-residue protein sequence, read N- to C-terminus: Fluoride-specific ion channel FluC (128 aa).

Helical transmembrane passes span I5–A25, L35–F55, L67–V87, and F96–L116. Na(+)-binding residues include G75 and T78.

Belongs to the fluoride channel Fluc/FEX (TC 1.A.43) family.

The protein resides in the cell inner membrane. The catalysed reaction is fluoride(in) = fluoride(out). Na(+) is not transported, but it plays an essential structural role and its presence is essential for fluoride channel function. In terms of biological role, fluoride-specific ion channel. Important for reducing fluoride concentration in the cell, thus reducing its toxicity. In Burkholderia orbicola (strain MC0-3), this protein is Fluoride-specific ion channel FluC.